The primary structure comprises 97 residues: Citrate lyase acyl carrier protein (97 aa).

S14 carries the post-translational modification O-(phosphoribosyl dephospho-coenzyme A)serine.

The protein belongs to the CitD family. As to quaternary structure, oligomer with a subunit composition of (alpha,beta,gamma)6.

The protein localises to the cytoplasm. Its function is as follows. Covalent carrier of the coenzyme of citrate lyase. The protein is Citrate lyase acyl carrier protein of Cronobacter sakazakii (strain ATCC BAA-894) (Enterobacter sakazakii).